We begin with the raw amino-acid sequence, 68 residues long: MRTSYLLLFTLCLLLSEMASGDNFLTGLGHRSDHYNCVRSGGQCLYSACPIYTKIQGTCYHGKAKCCK.

The signal sequence occupies residues 1–21 (MRTSYLLLFTLCLLLSEMASG). The propeptide occupies 22–32 (DNFLTGLGHRS). 3 disulfide bridges follow: cysteine 37–cysteine 66, cysteine 44–cysteine 59, and cysteine 49–cysteine 67.

The protein belongs to the beta-defensin family. Monomer. Homodimer.

It localises to the secreted. Its subcellular location is the membrane. In terms of biological role, has bactericidal activity. May act as a ligand for C-C chemokine receptor CCR6. Positively regulates the sperm motility and bactericidal activity in a CCR6-dependent manner. Binds to CCR6 and triggers Ca2+ mobilization in the sperm which is important for its motility. This chain is Beta-defensin 1 (DEFB1), found in Allochrocebus preussi (Preuss's monkey).